The following is a 468-amino-acid chain: MSNKVKPHINIVVIGHVDSGKSTSTGHMIYKCGGIDKRQIEKFEKEAQEMGKGSFKYAWVLDKLKAERERGITIDIALWKFETTKYVVTIIDAPGHRDFIKNMITGTSQADCAVLIVASSTGEFEAGISKNGQTREHALLAFTLGVKQMIVAVNKIDNTEPPYSEARFNEIKKEISAYVKKVGYDPKTVPVLPVSGWHGDNMIEPSPNMSWYKGWEVEYKDTGKHTGKTLLEALDNIPLPARPSSKPLRLPLQDVYKIGGIGTVPVGRVETGILKPGMVVTFCPANLSTEVKSVEMHHESLPEALPGDNVGFNVKNVSIKDIRRGMVASDSKNDPAIEAASFKAQVIILNHPGEIHAGYQPVLDCHTAHIACKFAELLEKIDRRSGKVIETEPKMVKSGDAAIINLIPSKGMCVESFSQYPPLGRFAVRDMRQTVAVGVIKEVDKTVAVAGKVTKSAQKAGVAAGKKK.

Residues 6-244 (KPHINIVVIG…DNIPLPARPS (239 aa)) enclose the tr-type G domain. Residues 15–22 (GHVDSGKS) are G1. 15–22 (GHVDSGKS) is a binding site for GTP. Residues 71-75 (GITID) form a G2 region. Residues 92 to 95 (DAPG) form a G3 region. Residues 92-96 (DAPGH) and 154-157 (NKID) each bind GTP. Residues 154–157 (NKID) form a G4 region. The G5 stretch occupies residues 195-197 (SGW). A 5-glutamyl glycerylphosphorylethanolamine mark is found at E303 and E376.

It belongs to the TRAFAC class translation factor GTPase superfamily. Classic translation factor GTPase family. EF-Tu/EF-1A subfamily.

The protein localises to the cytoplasm. In terms of biological role, this protein promotes the GTP-dependent binding of aminoacyl-tRNA to the A-site of ribosomes during protein biosynthesis. The sequence is that of Elongation factor 1-alpha from Hydra vulgaris (Hydra).